A 70-amino-acid polypeptide reads, in one-letter code: DNA gyrase inhibitor YacG (70 aa).

Zn(2+) contacts are provided by Cys9, Cys12, Cys28, and Cys32. A disordered region spans residues Glu43 to Gln70.

This sequence belongs to the DNA gyrase inhibitor YacG family. In terms of assembly, interacts with GyrB. It depends on Zn(2+) as a cofactor.

Functionally, inhibits all the catalytic activities of DNA gyrase by preventing its interaction with DNA. Acts by binding directly to the C-terminal domain of GyrB, which probably disrupts DNA binding by the gyrase. In Legionella pneumophila (strain Paris), this protein is DNA gyrase inhibitor YacG.